Reading from the N-terminus, the 960-residue chain is Leucine--tRNA ligase (960 aa).

A 'HIGH' region motif is present at residues proline 71–histidine 82. The short motif at lysine 729 to serine 733 is the 'KMSKS' region element. Lysine 732 contacts ATP.

The protein belongs to the class-I aminoacyl-tRNA synthetase family.

Its subcellular location is the cytoplasm. The enzyme catalyses tRNA(Leu) + L-leucine + ATP = L-leucyl-tRNA(Leu) + AMP + diphosphate. This chain is Leucine--tRNA ligase, found in Corynebacterium diphtheriae (strain ATCC 700971 / NCTC 13129 / Biotype gravis).